We begin with the raw amino-acid sequence, 261 residues long: Lytic polysaccharide monooxygenase-like protein X325 (261 aa).

The first 17 residues, 1–17 (MQLSALALATLLATANA), serve as a signal peptide directing secretion. Positions 18, 64, and 133 each coordinate Cu(2+). Cystine bridges form between C39–C139 and C108–C155. N-linked (GlcNAc...) asparagine glycosylation is found at N157 and N183. A disordered region spans residues 174–210 (LAENTQGSGNSSGHAHGSSGSGSASASKTDSKSSAAS). The segment covering 180-210 (GSGNSSGHAHGSSGSGSASASKTDSKSSAAS) has biased composition (low complexity). N238 is lipidated: GPI-anchor amidated asparagine. Residues 239–261 (SGSLAYVNGALAIGGVVAAALLI) constitute a propeptide, removed in mature form.

The protein belongs to the X325 family. The cofactor is Cu(2+).

It localises to the cell membrane. Lytic polysaccharide monooxygenase-like protein that has diverged to biological functions other than polysaccharide degradation since it does not perform oxidative cleavage of polysaccharides. Acts as a cell surface-bound protein that functions in the copper-accumulation pathway. This is Lytic polysaccharide monooxygenase-like protein X325 from Yarrowia lipolytica (strain CLIB 122 / E 150) (Yeast).